A 444-amino-acid chain; its full sequence is Retinoic acid receptor alpha-A (444 aa).

The segment at 1–71 (MYESVDVNPF…PPSPPPPPRI (71 aa)) is modulating. Polar residues predominate over residues 35-46 (SIRHQHWSGSNH). A disordered region spans residues 35 to 67 (SIRHQHWSGSNHSIETQSTSSEEIVPSPPSPPP). Residues 47 to 58 (SIETQSTSSEEI) are compositionally biased toward low complexity. The nuclear receptor DNA-binding region spans 72–147 (YKPCFVCQDK…VGMSKESVRN (76 aa)). 2 NR C4-type zinc fingers span residues 75-95 (CFVC…CEGC) and 111-130 (CHRE…CQYC). The interval 148–169 (DRNKKKKEEKKPECTENYTLSP) is hinge. The region spanning 170–404 (DTEQMIDRVR…PLIQEMLENS (235 aa)) is the NR LBD domain. The 9aaTAD motif lies at 395 to 403 (PLIQEMLEN). The segment at 402–444 (ENSEGLESSSGAQGSRASATTPGSCSPSLSPNSAQSSPPTQSP) is disordered.

Belongs to the nuclear hormone receptor family. NR1 subfamily. Heterodimer; with an rxr molecule. Binds DNA preferentially as a rar/rxr heterodimer. As to expression, in the embryo, zygotic expression largely overlaps that of rarab, with high levels in hindbrain, lateral mesoderm and tail bud. In the adult, strong expression in brain and muscle, weaker expression in ovary, liver and digestive tract.

The protein resides in the nucleus. Functionally, receptor for retinoic acid. Retinoic acid receptors bind as heterodimers to their target response elements in response to their ligands, all-trans or 9-cis retinoic acid, and regulate gene expression in various biological processes. The rar/rxr heterodimers bind to the retinoic acid response elements (RARE) composed of tandem 5'-AGGTCA-3' sites known as DR1-DR5. Required for hindbrain patterning. The chain is Retinoic acid receptor alpha-A from Danio rerio (Zebrafish).